A 236-amino-acid chain; its full sequence is Small ribosomal subunit protein uS2c (236 aa).

Belongs to the universal ribosomal protein uS2 family.

Its subcellular location is the plastid. It is found in the chloroplast. The protein is Small ribosomal subunit protein uS2c (rps2) of Phaseolus vulgaris (Kidney bean).